Consider the following 327-residue polypeptide: tRNA N6-adenosine threonylcarbamoyltransferase (327 aa).

Residues histidine 109 and histidine 113 each coordinate Fe cation. Substrate-binding positions include methionine 132–glycine 136, aspartate 165, glycine 178, aspartate 182, and asparagine 268. Position 296 (aspartate 296) interacts with Fe cation.

The protein belongs to the KAE1 / TsaD family. Requires Fe(2+) as cofactor.

The protein resides in the cytoplasm. It catalyses the reaction L-threonylcarbamoyladenylate + adenosine(37) in tRNA = N(6)-L-threonylcarbamoyladenosine(37) in tRNA + AMP + H(+). Functionally, required for the formation of a threonylcarbamoyl group on adenosine at position 37 (t(6)A37) in tRNAs that read codons beginning with adenine. Is involved in the transfer of the threonylcarbamoyl moiety of threonylcarbamoyl-AMP (TC-AMP) to the N6 group of A37, together with TsaE and TsaB. TsaD likely plays a direct catalytic role in this reaction. In Thermotoga neapolitana (strain ATCC 49049 / DSM 4359 / NBRC 107923 / NS-E), this protein is tRNA N6-adenosine threonylcarbamoyltransferase.